A 175-amino-acid polypeptide reads, in one-letter code: ATP synthase subunit b (175 aa).

Residues valine 18–leucine 38 traverse the membrane as a helical segment.

It belongs to the ATPase B chain family. As to quaternary structure, F-type ATPases have 2 components, F(1) - the catalytic core - and F(0) - the membrane proton channel. F(1) has five subunits: alpha(3), beta(3), gamma(1), delta(1), epsilon(1). F(0) has three main subunits: a(1), b(2) and c(10-14). The alpha and beta chains form an alternating ring which encloses part of the gamma chain. F(1) is attached to F(0) by a central stalk formed by the gamma and epsilon chains, while a peripheral stalk is formed by the delta and b chains.

The protein resides in the cell inner membrane. Its function is as follows. F(1)F(0) ATP synthase produces ATP from ADP in the presence of a proton or sodium gradient. F-type ATPases consist of two structural domains, F(1) containing the extramembraneous catalytic core and F(0) containing the membrane proton channel, linked together by a central stalk and a peripheral stalk. During catalysis, ATP synthesis in the catalytic domain of F(1) is coupled via a rotary mechanism of the central stalk subunits to proton translocation. In terms of biological role, component of the F(0) channel, it forms part of the peripheral stalk, linking F(1) to F(0). The chain is ATP synthase subunit b from Akkermansia muciniphila (strain ATCC BAA-835 / DSM 22959 / JCM 33894 / BCRC 81048 / CCUG 64013 / CIP 107961 / Muc).